We begin with the raw amino-acid sequence, 874 residues long: UPF0182 protein Sfum_2137 (874 aa).

7 consecutive transmembrane segments (helical) span residues tryptophan 7–leucine 27, isoleucine 57–alanine 77, serine 110–phenylalanine 130, arginine 171–glutamate 191, leucine 208–glutamine 228, valine 252–isoleucine 272, and proline 283–leucine 303.

It belongs to the UPF0182 family.

The protein localises to the cell membrane. The chain is UPF0182 protein Sfum_2137 from Syntrophobacter fumaroxidans (strain DSM 10017 / MPOB).